Here is a 388-residue protein sequence, read N- to C-terminus: Flap endonuclease 1 (388 aa).

The tract at residues 1–104 is N-domain; that stretch reads MGILGLSKLI…GELAKRAERR (104 aa). Residue D34 participates in Mg(2+) binding. DNA contacts are provided by R47 and R70. Residues D86, E158, E160, D179, and D181 each coordinate Mg(2+). Positions 122 to 253 are I-domain; it reads EIEKFNRRLV…KRAIELIKTY (132 aa). E158 contacts DNA. DNA contacts are provided by G231 and D233. Residue D233 participates in Mg(2+) binding. The tract at residues 336 to 344 is interaction with PCNA; that stretch reads TQVRLDSFF. The tract at residues 351–388 is disordered; sequence PNATAAAKRKAEEIKKSANNKKAKTSGGSGAARGRRPK.

The protein belongs to the XPG/RAD2 endonuclease family. FEN1 subfamily. Interacts with PCNA. Three molecules of FEN1 bind to one PCNA trimer with each molecule binding to one PCNA monomer. PCNA stimulates the nuclease activity without altering cleavage specificity. Mg(2+) is required as a cofactor. Post-translationally, phosphorylated. Phosphorylation upon DNA damage induces relocalization to the nuclear plasma.

Its subcellular location is the nucleus. It localises to the nucleolus. The protein localises to the nucleoplasm. The protein resides in the mitochondrion. Structure-specific nuclease with 5'-flap endonuclease and 5'-3' exonuclease activities involved in DNA replication and repair. During DNA replication, cleaves the 5'-overhanging flap structure that is generated by displacement synthesis when DNA polymerase encounters the 5'-end of a downstream Okazaki fragment. It enters the flap from the 5'-end and then tracks to cleave the flap base, leaving a nick for ligation. Also involved in the long patch base excision repair (LP-BER) pathway, by cleaving within the apurinic/apyrimidinic (AP) site-terminated flap. Acts as a genome stabilization factor that prevents flaps from equilibrating into structures that lead to duplications and deletions. Also possesses 5'-3' exonuclease activity on nicked or gapped double-stranded DNA, and exhibits RNase H activity. Also involved in replication and repair of rDNA and in repairing mitochondrial DNA. This Drosophila mojavensis (Fruit fly) protein is Flap endonuclease 1.